We begin with the raw amino-acid sequence, 611 residues long: MAYFNYNRRKSSVAQIGDTPMGGENPIRIQSMANVSTMDTEAAVAQAIRMIEAGAEYVRFTAQGEREARNLGEIRKQLNEQGYTTPLVADIHFNPRAADAAAGEVEKVRINPGNYVDKVKTFSHLEYTDEEYAAEIEKIRERFVPFLNICKAHGTAIRIGVNHGSLSDRIMSRYGDTPEGMVASCMEFLRICREENFPDVVISIKASNTVVMVRTVRLLVRTMEAENMHYPLHLGVTEAGDGEDGRIKSAVGIGTLLCDGIGDTIRVSLSEDPEAEMPVARKLVDYIRERENHRPIEASMAPGFDTVATSRRISRVVEGIGGTFSPVVISDRSSGDFEFDYLSLPDYIYIGKEDPDNLPDNFRLLVDAHFWKERPNAFPCFIASEAEELKDYDCPLKFIRLTYMDLTDRMLEILKADKTVVVLLSTHHRNGVGSQRAAMHKLLMAGCDVPVVLHRDFRETDVELLQLKSAADFGTLLLDGFGDGLMLHNEGCEAVVSDRCMFGILQATRTRISKTEYISCPSCGRTLYDLQTTIARIKEATSHLKGLKIGIMGCIVNGPGEMADADYGYVGAGRGQISLYKGKECVLKNIPEEDAVERLVQLIKENGDWVN.

C520, C523, C554, and E561 together coordinate [4Fe-4S] cluster.

This sequence belongs to the IspG family. [4Fe-4S] cluster is required as a cofactor.

It catalyses the reaction (2E)-4-hydroxy-3-methylbut-2-enyl diphosphate + oxidized [flavodoxin] + H2O + 2 H(+) = 2-C-methyl-D-erythritol 2,4-cyclic diphosphate + reduced [flavodoxin]. It functions in the pathway isoprenoid biosynthesis; isopentenyl diphosphate biosynthesis via DXP pathway; isopentenyl diphosphate from 1-deoxy-D-xylulose 5-phosphate: step 5/6. Functionally, converts 2C-methyl-D-erythritol 2,4-cyclodiphosphate (ME-2,4cPP) into 1-hydroxy-2-methyl-2-(E)-butenyl 4-diphosphate. The sequence is that of 4-hydroxy-3-methylbut-2-en-1-yl diphosphate synthase (flavodoxin) from Parabacteroides distasonis (strain ATCC 8503 / DSM 20701 / CIP 104284 / JCM 5825 / NCTC 11152).